Here is a 132-residue protein sequence, read N- to C-terminus: Fatty acid-binding protein type 2 (132 aa).

A2 is modified (N-acetylalanine).

Belongs to the calycin superfamily. Fatty-acid binding protein (FABP) family.

The protein is Fatty acid-binding protein type 2 of Fasciola hepatica (Liver fluke).